A 586-amino-acid chain; its full sequence is Arginine--tRNA ligase (586 aa).

Residues 128–138 carry the 'HIGH' region motif; the sequence is ANPTGPLHVGH.

Belongs to the class-I aminoacyl-tRNA synthetase family. Monomer.

It localises to the cytoplasm. It catalyses the reaction tRNA(Arg) + L-arginine + ATP = L-arginyl-tRNA(Arg) + AMP + diphosphate. This Legionella pneumophila (strain Corby) protein is Arginine--tRNA ligase.